Reading from the N-terminus, the 242-residue chain is Lactate utilization protein A 2 (242 aa).

Belongs to the LutA/YkgE family.

Functionally, is involved in L-lactate degradation and allows cells to grow with lactate as the sole carbon source. The chain is Lactate utilization protein A 2 from Bacillus cereus (strain Q1).